Reading from the N-terminus, the 273-residue chain is NAD(P)H-hydrate epimerase (273 aa).

The YjeF N-terminal domain occupies 52–260; sequence AQQIDQELFN…GIIQKYELNL (209 aa). Position 105–109 (105–109) interacts with (6S)-NADPHX; sequence NNGGD. 2 residues coordinate K(+): Asn-106 and Asp-170. (6S)-NADPHX is bound by residues 174 to 180 and Asp-203; that span reads GFSFKGE. Residue Ser-206 coordinates K(+).

Belongs to the NnrE/AIBP family. The cofactor is K(+).

The enzyme catalyses (6R)-NADHX = (6S)-NADHX. It carries out the reaction (6R)-NADPHX = (6S)-NADPHX. In terms of biological role, catalyzes the epimerization of the S- and R-forms of NAD(P)HX, a damaged form of NAD(P)H that is a result of enzymatic or heat-dependent hydration. This is a prerequisite for the S-specific NAD(P)H-hydrate dehydratase to allow the repair of both epimers of NAD(P)HX. The sequence is that of NAD(P)H-hydrate epimerase from Branchiostoma floridae (Florida lancelet).